The chain runs to 471 residues: Glutamate--tRNA ligase (471 aa).

The 'HIGH' region signature appears at 9-19 (PSPTGYLHVGG). Residues cysteine 98, cysteine 100, cysteine 125, and histidine 127 each coordinate Zn(2+). The 'KMSKS' region motif lies at 237–241 (KLSKR). Lysine 240 is a binding site for ATP.

It belongs to the class-I aminoacyl-tRNA synthetase family. Glutamate--tRNA ligase type 1 subfamily. In terms of assembly, monomer. Zn(2+) serves as cofactor.

The protein localises to the cytoplasm. The catalysed reaction is tRNA(Glu) + L-glutamate + ATP = L-glutamyl-tRNA(Glu) + AMP + diphosphate. Catalyzes the attachment of glutamate to tRNA(Glu) in a two-step reaction: glutamate is first activated by ATP to form Glu-AMP and then transferred to the acceptor end of tRNA(Glu). This is Glutamate--tRNA ligase from Salmonella choleraesuis (strain SC-B67).